A 353-amino-acid polypeptide reads, in one-letter code: tRNA N6-adenosine threonylcarbamoyltransferase (353 aa).

The Fe cation site is built by histidine 109 and histidine 113. Residues 136–140, aspartate 169, glycine 182, aspartate 186, and asparagine 284 each bind substrate; that span reads TVSGG. Aspartate 312 serves as a coordination point for Fe cation.

It belongs to the KAE1 / TsaD family. Fe(2+) is required as a cofactor.

The protein resides in the cytoplasm. It carries out the reaction L-threonylcarbamoyladenylate + adenosine(37) in tRNA = N(6)-L-threonylcarbamoyladenosine(37) in tRNA + AMP + H(+). In terms of biological role, required for the formation of a threonylcarbamoyl group on adenosine at position 37 (t(6)A37) in tRNAs that read codons beginning with adenine. Is involved in the transfer of the threonylcarbamoyl moiety of threonylcarbamoyl-AMP (TC-AMP) to the N6 group of A37, together with TsaE and TsaB. TsaD likely plays a direct catalytic role in this reaction. The sequence is that of tRNA N6-adenosine threonylcarbamoyltransferase from Chlorobium phaeobacteroides (strain DSM 266 / SMG 266 / 2430).